Here is a 145-residue protein sequence, read N- to C-terminus: Probable DNA-directed RNA polymerases I and III subunit RPAC2 (145 aa).

The disordered stretch occupies residues 1-52 (MGKKSEKKVVEETMEVDEQPAVEPEAVPEEEPEVEDEDLNVPKKKKMEILDP). The segment covering 12–39 (ETMEVDEQPAVEPEAVPEEEPEVEDEDL) has biased composition (acidic residues).

This sequence belongs to the archaeal Rpo11/eukaryotic RPB11/RPC19 RNA polymerase subunit family. As to quaternary structure, component of the RNA polymerase I (Pol I) and RNA polymerase III (Pol III) complexes consisting of at least 13 and 17 subunits, respectively.

The protein localises to the nucleus. Functionally, DNA-dependent RNA polymerase catalyzes the transcription of DNA into RNA using the four ribonucleoside triphosphates as substrates. Common core component of RNA polymerases I and III which synthesize ribosomal RNA precursors and small RNAs, such as 5S rRNA and tRNAs, respectively. The polypeptide is Probable DNA-directed RNA polymerases I and III subunit RPAC2 (rpac-19) (Caenorhabditis briggsae).